Here is a 170-residue protein sequence, read N- to C-terminus: Photosystem II extrinsic protein V (170 aa).

Residues 1–33 form the signal peptide; that stretch reads MASLFSTLQRSLKGLLILVPVLIGLVLASPAEA. Heme c contacts are provided by Cys-70, Cys-73, His-74, and Met-137.

It belongs to the cytochrome c family. PsbV subfamily. As to quaternary structure, PSII is composed of 1 copy each of membrane proteins PsbA, PsbB, PsbC, PsbD, PsbE, PsbF, PsbH, PsbI, PsbJ, PsbK, PsbL, PsbM, PsbT, PsbX, PsbY, PsbZ, Psb30/Ycf12, peripheral proteins PsbO, CyanoQ (PsbQ), PsbU, PsbV and a large number of cofactors. It forms dimeric complexes. Requires heme c as cofactor.

It localises to the cellular thylakoid membrane. Functionally, one of the extrinsic, lumenal subunits of photosystem II (PSII). PSII is a light-driven water plastoquinone oxidoreductase, using light energy to abstract electrons from H(2)O, generating a proton gradient subsequently used for ATP formation. The extrinsic proteins stabilize the structure of photosystem II oxygen-evolving complex (OEC), the ion environment of oxygen evolution and protect the OEC against heat-induced inactivation. Low-potential cytochrome c that plays a role in the OEC of PSII. This is Photosystem II extrinsic protein V from Parasynechococcus marenigrum (strain WH8102).